The chain runs to 512 residues: Apolipoprotein N-acyltransferase (512 aa).

6 helical membrane-spanning segments follow: residues 5–25 (LDKY…FAAA), 56–76 (FAVS…FYWI), 92–112 (VPLT…CFWL), 118–138 (LPRG…TEFA), 168–188 (LGGI…LVLA), and 195–215 (SGKR…GYTA). A CN hydrolase domain is found at 233–477 (LQGNIDQTLK…ETVLEGHIKG (245 aa)). The Proton acceptor role is filled by glutamate 271. Lysine 337 is an active-site residue. Cysteine 389 serves as the catalytic Nucleophile. Residues 487 to 507 (TGSSWWLMGILALAALILFIF) traverse the membrane as a helical segment.

The protein belongs to the CN hydrolase family. Apolipoprotein N-acyltransferase subfamily.

The protein localises to the cell inner membrane. The catalysed reaction is N-terminal S-1,2-diacyl-sn-glyceryl-L-cysteinyl-[lipoprotein] + a glycerophospholipid = N-acyl-S-1,2-diacyl-sn-glyceryl-L-cysteinyl-[lipoprotein] + a 2-acyl-sn-glycero-3-phospholipid + H(+). Its pathway is protein modification; lipoprotein biosynthesis (N-acyl transfer). Catalyzes the phospholipid dependent N-acylation of the N-terminal cysteine of apolipoprotein, the last step in lipoprotein maturation. This chain is Apolipoprotein N-acyltransferase, found in Neisseria meningitidis serogroup B (strain ATCC BAA-335 / MC58).